A 148-amino-acid polypeptide reads, in one-letter code: UPF0756 membrane protein CKO_01811 (148 aa).

The next 4 helical transmembrane spans lie at 14-34 (ALGF…LIIV), 51-71 (LTVG…SGSL), 86-106 (LVAI…VTLM), and 121-141 (VLGV…AGLV).

It belongs to the UPF0756 family.

Its subcellular location is the cell membrane. The chain is UPF0756 membrane protein CKO_01811 from Citrobacter koseri (strain ATCC BAA-895 / CDC 4225-83 / SGSC4696).